The following is a 611-amino-acid chain: Adenosylhomocysteinase 3 (611 aa).

Low complexity-rich tracts occupy residues 1-14 (MSVQ…AAKV), 40-57 (AMAP…APAA), and 68-78 (GPAAALSPAAG). Residues 1-184 (MSVQVVSAAA…KQQKNSKGNS (184 aa)) are disordered. Position 2 is an N-acetylserine (serine 2). An LISN domain, inhibits interaction with ITPR1 region spans residues 2-109 (SVQVVSAAAA…DGGEALVSPD (108 aa)). Phosphoserine is present on serine 107. A compositionally biased stretch (basic residues) spans 135–144 (RPTKIGRRSL). Low complexity predominate over residues 145–164 (SRSISQSSTDSYSSAASYTD). Phosphoserine occurs at positions 149, 152, 155, and 158. Threonine 236, aspartate 310, and glutamate 335 together coordinate substrate. 336–338 (SVT) contributes to the NAD(+) binding site. Substrate-binding residues include lysine 365 and aspartate 369. NAD(+) is bound by residues asparagine 370, 401 to 406 (GEVGKG), glutamate 422, asparagine 457, 478 to 479 (MG), and asparagine 525.

This sequence belongs to the adenosylhomocysteinase family. Homotetramer. Forms heteromultimers with AHCYL1 (via the C-terminal region). Interacts with ITPR1; with lower affinity than AHCYL1 and maybe via ITPR1. Interacts with SLC4A4. Interacts with ZCCHC4. It depends on NAD(+) as a cofactor. Post-translationally, phosphorylated during neuronal differentiation at the LISN domain. Expressed in parotid and acinar cells (at protein level).

The protein localises to the cytoplasm. It is found in the microsome. The catalysed reaction is S-adenosyl-L-homocysteine + H2O = L-homocysteine + adenosine. It functions in the pathway amino-acid biosynthesis; L-homocysteine biosynthesis; L-homocysteine from S-adenosyl-L-homocysteine: step 1/1. May regulate the electrogenic sodium/bicarbonate cotransporter SLC4A4 activity and Mg(2+)-sensitivity. On the contrary of its homolog AHCYL1, does not regulate ITPR1 sensitivity to inositol 1,4,5-trisphosphate. In Bos taurus (Bovine), this protein is Adenosylhomocysteinase 3.